The following is a 523-amino-acid chain: Solute carrier family 35 member F5 (523 aa).

Transmembrane regions (helical) follow at residues 69-89 and 101-121; these read MALG…SSEL and FFST…FIIW. Ser-207 carries the post-translational modification Phosphoserine. Transmembrane regions (helical) follow at residues 243–263, 268–288, 296–316, 327–347, 361–381, 395–415, 420–440, and 452–472; these read ISFF…EALS, AIVN…AAVF, FTLS…LVNL, TIGS…IVMI, MFFG…FFLL, VVLM…EFLW, FLTS…LSII, and WLFF…TLLC. The region spanning 252–316 is the EamA domain; it reads FLANLSYQEA…SIGGVVLVNL (65 aa).

It belongs to the SLC35F solute transporter family.

The protein localises to the membrane. Putative solute transporter. The protein is Solute carrier family 35 member F5 (SLC35F5) of Pongo abelii (Sumatran orangutan).